Reading from the N-terminus, the 146-residue chain is Hemoglobin subunit beta (146 aa).

At V1 the chain carries N-acetylvaline. Positions 2–146 constitute a Globin domain; the sequence is NLTAAEKTQV…VANALAHKYH (145 aa). T12 bears the Phosphothreonine mark. K59 carries the N6-acetyllysine modification. A heme b-binding site is contributed by H63. K82 carries the N6-acetyllysine modification. H92 contacts heme b. C93 bears the S-nitrosocysteine mark. K144 carries the N6-acetyllysine modification.

It belongs to the globin family. As to quaternary structure, heterotetramer of two alpha chains and two beta chains. In terms of tissue distribution, red blood cells.

In terms of biological role, involved in oxygen transport from the lung to the various peripheral tissues. This Loxodonta africana (African elephant) protein is Hemoglobin subunit beta (HBB).